We begin with the raw amino-acid sequence, 270 residues long: Ribosomal RNA-processing protein 7 homolog (270 aa).

Positions 233–268 (TFQIKKNRQEKAQELLKKFEEDRKRITQLKQARNFK) form a coiled coil.

It belongs to the RRP7 family.

The protein is Ribosomal RNA-processing protein 7 homolog of Caenorhabditis elegans.